We begin with the raw amino-acid sequence, 261 residues long: MELLQVTILFLLPSICSSNSTGVLEAANNSLVVTTTKPSITTPNTESLQKNVVTPTTGTTPKGTITNELLKMSLMSTATFLTSKDEGLKATTTDVRKNDSIISNVTVTSVTLPNAVSTLQSSKPKTETQSSIKTTEIPGSVLQPDASPSKTGTLTSIPVTIPENTSQSQVIGTEGGKNASTSATSRSYSSIILPVVIALIVITLSVFVLVGLYRMCWKADPGTPENGNDQPQSDKESVKLLTVKTISHESGEHSAQGKTKN.

An N-terminal signal peptide occupies residues 1 to 18 (MELLQVTILFLLPSICSS). N-linked (GlcNAc...) asparagine glycans are attached at residues Asn19, Asn28, Asn98, and Asn104. Residues 19-190 (NSTGVLEAAN…TSATSRSYSS (172 aa)) are Extracellular-facing. 2 stretches are compositionally biased toward polar residues: residues 118–134 (TLQSSKPKTETQSSIKT) and 146–171 (ASPSKTGTLTSIPVTIPENTSQSQVI). The tract at residues 118–183 (TLQSSKPKTE…EGGKNASTSA (66 aa)) is disordered. N-linked (GlcNAc...) asparagine glycosylation is found at Asn164 and Asn178. The chain crosses the membrane as a helical span at residues 191 to 211 (IILPVVIALIVITLSVFVLVG). Residues 212 to 261 (LYRMCWKADPGTPENGNDQPQSDKESVKLLTVKTISHESGEHSAQGKTKN) lie on the Cytoplasmic side of the membrane. Ser237 carries the post-translational modification Phosphoserine.

Highly O-glycosylated. Sialic acid-rich glycoprotein. As to expression, expressed in heart, kidney and lung.

The protein localises to the cell membrane. It localises to the membrane. The protein resides in the secreted. In terms of biological role, endothelial sialomucin, also called endomucin or mucin-like sialoglycoprotein, which interferes with the assembly of focal adhesion complexes and inhibits interaction between cells and the extracellular matrix. In Homo sapiens (Human), this protein is Endomucin (EMCN).